Reading from the N-terminus, the 161-residue chain is Small ribosomal subunit protein bS6 (161 aa).

Residues 107 to 161 form a disordered region; that stretch reads KGDERERGFRGPKPAGRFESGRGGAGGARRGYDDREEFRARNEREDGRDTDGEAE. The segment covering 136–161 has biased composition (basic and acidic residues); sequence RGYDDREEFRARNEREDGRDTDGEAE.

It belongs to the bacterial ribosomal protein bS6 family.

Its function is as follows. Binds together with bS18 to 16S ribosomal RNA. This Gluconacetobacter diazotrophicus (strain ATCC 49037 / DSM 5601 / CCUG 37298 / CIP 103539 / LMG 7603 / PAl5) protein is Small ribosomal subunit protein bS6.